A 493-amino-acid polypeptide reads, in one-letter code: 11S globulin seed storage protein G3 (493 aa).

The first 20 residues, 1 to 20 (MASKATLLLAFTLLFATCIA), serve as a signal peptide directing secretion. Cystine bridges form between Cys-32–Cys-65 and Cys-103–Cys-312. Residues 37–248 (IEALEPIEVI…SFNVDQETAQ (212 aa)) form the Cupin type-1 1 domain. 2 disordered regions span residues 190–229 (PQAQAQSQQQQQRQPRQQSPQRQRQRQRQGQGQNAGNIFN) and 269–305 (IVRPPQDRRSPRQQQEQATSPRQQQEQQQGRRGGWSN). Composition is skewed to low complexity over residues 191–221 (QAQAQSQQQQQRQPRQQSPQRQRQRQRQGQG) and 280–298 (RQQQEQATSPRQQQEQQQG). The 150-residue stretch at 318 to 467 (VNIDNPSQAD…RYQLSREEAQ (150 aa)) folds into the Cupin type-1 2 domain.

The protein belongs to the 11S seed storage protein (globulins) family. As to quaternary structure, hexamer; each subunit is composed of an acidic and a basic chain derived from a single precursor and linked by a disulfide bond.

Functionally, this is a seed storage protein. The polypeptide is 11S globulin seed storage protein G3 (HAG3) (Helianthus annuus (Common sunflower)).